The chain runs to 158 residues: NAD(P)H-quinone oxidoreductase subunit J, chloroplastic (158 aa).

It belongs to the complex I 30 kDa subunit family. In terms of assembly, NDH is composed of at least 16 different subunits, 5 of which are encoded in the nucleus.

It localises to the plastid. Its subcellular location is the chloroplast thylakoid membrane. It carries out the reaction a plastoquinone + NADH + (n+1) H(+)(in) = a plastoquinol + NAD(+) + n H(+)(out). The catalysed reaction is a plastoquinone + NADPH + (n+1) H(+)(in) = a plastoquinol + NADP(+) + n H(+)(out). Functionally, NDH shuttles electrons from NAD(P)H:plastoquinone, via FMN and iron-sulfur (Fe-S) centers, to quinones in the photosynthetic chain and possibly in a chloroplast respiratory chain. The immediate electron acceptor for the enzyme in this species is believed to be plastoquinone. Couples the redox reaction to proton translocation, and thus conserves the redox energy in a proton gradient. This is NAD(P)H-quinone oxidoreductase subunit J, chloroplastic from Ranunculus macranthus (Large buttercup).